The following is a 102-amino-acid chain: NADH-quinone oxidoreductase subunit K (102 aa).

3 helical membrane-spanning segments follow: residues 5-25 (LAHY…GIFL), 31-51 (IILL…FVAF), and 62-82 (VFVF…LAIL).

It belongs to the complex I subunit 4L family. As to quaternary structure, NDH-1 is composed of 14 different subunits. Subunits NuoA, H, J, K, L, M, N constitute the membrane sector of the complex.

The protein resides in the cell inner membrane. The enzyme catalyses a quinone + NADH + 5 H(+)(in) = a quinol + NAD(+) + 4 H(+)(out). In terms of biological role, NDH-1 shuttles electrons from NADH, via FMN and iron-sulfur (Fe-S) centers, to quinones in the respiratory chain. The immediate electron acceptor for the enzyme in this species is believed to be ubiquinone. Couples the redox reaction to proton translocation (for every two electrons transferred, four hydrogen ions are translocated across the cytoplasmic membrane), and thus conserves the redox energy in a proton gradient. The chain is NADH-quinone oxidoreductase subunit K from Bordetella petrii (strain ATCC BAA-461 / DSM 12804 / CCUG 43448).